The sequence spans 768 residues: Vacuolar basic amino acid transporter 4 (768 aa).

At 1 to 252 (MGKKDRQRKK…HDLTRRRIFS (252 aa)) the chain is on the cytoplasmic side. Positions 9–40 (KKLREFAKLKNRQRNLRKSVQTLKNEVQREAK) form a coiled coil. Residues 34 to 172 (EVQREAKVPR…ELPVSSSNSF (139 aa)) are disordered. Phosphoserine is present on residues Ser62, Ser99, and Ser106. The segment covering 110–121 (KPADKANEDDLK) has biased composition (basic and acidic residues). Residues 132–159 (SALQSSITDFSDRSVSPLQSITSCNTPM) show a composition bias toward polar residues. Ser160 and Ser192 each carry phosphoserine. Residues 253 to 273 (SCMCTYLFFIAMDSSIILVIA) form a helical membrane-spanning segment. Topologically, residues 274-282 (SKIASEFHE) are vacuolar. Residues 283–305 (LWRLSLVISAYLLSNAIGQLVFL) form a helical membrane-spanning segment. At 306–311 (KLSLIS) the chain is on the cytoplasmic side. A helical membrane pass occupies residues 312-331 (SVKLLLCIAQFSFILGGYLS). Residues 332 to 334 (WSS) lie on the Vacuolar side of the membrane. A helical membrane pass occupies residues 335 to 357 (AHFWTFIFARCVTGFGGGSLIAL). Residues 358-375 (KSTIMNRFSQKNDSRYSL) lie on the Cytoplasmic side of the membrane. The helical transmembrane segment at 376–396 (SASMITFAMGVVIGPFMMNLF) threads the bilayer. The Vacuolar portion of the chain corresponds to 397 to 406 (DSSHGSGWRN). A helical transmembrane segment spans residues 407-427 (AFLIPVPFCLVNASIMLADMY). Topologically, residues 428-447 (SVKSTLYGRPTPTLWKRFKN) are cytoplasmic. Residues 448 to 468 (TLLSPDLYEILTLTLFLLCFV) traverse the membrane as a helical segment. The Vacuolar portion of the chain corresponds to 469–481 (QVTSLDLTGLKNN). Asn480 is a glycosylation site (N-linked (GlcNAc...) asparagine). A helical transmembrane segment spans residues 482–502 (TMIQALLFSVIIVCGILFFLI). Residues 503–522 (ETSDTYMNSVISMSLQGDKR) lie on the Cytoplasmic side of the membrane. Residues 523-543 (LIWTMIGISFCFAALMCIIPF) traverse the membrane as a helical segment. Topologically, residues 544–562 (GTTYFIIVLNLSTLQLAER) are vacuolar. Asn553 is a glycosylation site (N-linked (GlcNAc...) asparagine). The helical transmembrane segment at 563-583 (LSPFFFSIVLGYFSVSYFWKS) threads the bilayer. Over 584–587 (KGQN) the chain is Cytoplasmic. Residues 588-608 (FLLKFVLSGATLLLYVALMGV) traverse the membrane as a helical segment. Residues 609 to 617 (SLNLPVWKQ) are Vacuolar-facing. A helical membrane pass occupies residues 618 to 638 (YICLSLPFLGSSMILTLLSNL). Topologically, residues 639–653 (YHEYHEQRKSPISGS) are cytoplasmic. A helical transmembrane segment spans residues 654–674 (IVYCFGAVGGTVGISLGGYVF). Topologically, residues 675–734 (HKTLIKLMHEKVMPFSKQGYLKKDLLKIIKHATESSDWVHESAPKFVFQTLIECYLQACR) are vacuolar. A helical membrane pass occupies residues 735 to 755 (NVFKLSTLFFTITVVAIFIFN). Residues 756-768 (RIHCRSQNCLSLS) are Cytoplasmic-facing.

The protein belongs to the major facilitator superfamily.

The protein resides in the vacuole membrane. Functionally, transporter required for vacuolar uptake of basic amino acids. This Saccharomyces cerevisiae (strain ATCC 204508 / S288c) (Baker's yeast) protein is Vacuolar basic amino acid transporter 4 (VBA4).